Consider the following 641-residue polypeptide: Kelch-like protein 22 (641 aa).

Residues 1–25 (MAEDLETMKPSQAPQQPSLPQGSSK) are disordered. Over residues 10 to 24 (PSQAPQQPSLPQGSS) the composition is skewed to low complexity. One can recognise a BTB domain in the interval 50 to 117 (FDVVLKVEGK…IYTSDLALSV (68 aa)). Kelch repeat units lie at residues 299 to 349 (CVVG…VLNN), 350 to 399 (FVYL…VLGD), 400 to 446 (FLYA…ALDG), 448 to 493 (MYVA…ALQE), 494 to 544 (KIYL…VLAK), and 545 to 593 (KIFV…VLTL).

In terms of assembly, component of the BCR(KLHL22) E3 ubiquitin ligase complex, at least composed of cul3, klhl22 and rbx1.

The protein localises to the cytoplasm. Its subcellular location is the cytosol. It is found in the cytoskeleton. It localises to the microtubule organizing center. The protein resides in the centrosome. The protein localises to the spindle. Its subcellular location is the nucleus. It is found in the lysosome. It functions in the pathway protein modification; protein ubiquitination. Functionally, substrate-specific adapter of a BCR (BTB-CUL3-RBX1) E3 ubiquitin ligase complex. The BCR(KLHL22) ubiquitin ligase complex could mediate the monoubiquitination of PLK1 and regulate its activity in spindle assembly checkpoint (SAC) and chromosome segregation. The BCR(KLHL22) ubiquitin ligase complex may also be responsible for the ubiquitin-dependent proteasomal degradation of DEPDC5 and the activation of the TORC1 pathway. The polypeptide is Kelch-like protein 22 (klhl22) (Xenopus tropicalis (Western clawed frog)).